A 264-amino-acid polypeptide reads, in one-letter code: Glutamate racemase (264 aa).

Residues 10-11 (DS) and 42-43 (YG) each bind substrate. The Proton donor/acceptor role is filled by cysteine 73. 74–75 (NT) lines the substrate pocket. Cysteine 183 (proton donor/acceptor) is an active-site residue. 184 to 185 (TH) contacts substrate.

It belongs to the aspartate/glutamate racemases family.

The enzyme catalyses L-glutamate = D-glutamate. Its pathway is cell wall biogenesis; peptidoglycan biosynthesis. In terms of biological role, provides the (R)-glutamate required for cell wall biosynthesis. The polypeptide is Glutamate racemase (Streptococcus pyogenes serotype M4 (strain MGAS10750)).